We begin with the raw amino-acid sequence, 70 residues long: Large ribosomal subunit protein eL24 (70 aa).

4 residues coordinate Zn(2+): C7, C10, C33, and C37. A C4-type zinc finger spans residues 7–37 (CSFCGYEIEPGKGKMVVEKDGTVLYFCSSKC).

This sequence belongs to the eukaryotic ribosomal protein eL24 family. Part of the 50S ribosomal subunit. Forms a cluster with proteins L3 and L14. The cofactor is Zn(2+).

Binds to the 23S rRNA. The chain is Large ribosomal subunit protein eL24 from Methanocaldococcus jannaschii (strain ATCC 43067 / DSM 2661 / JAL-1 / JCM 10045 / NBRC 100440) (Methanococcus jannaschii).